The following is a 158-amino-acid chain: ATP synthase subunit delta (158 aa).

Belongs to the ATPase delta chain family. F-type ATPases have 2 components, F(1) - the catalytic core - and F(0) - the membrane proton channel. F(1) has five subunits: alpha(3), beta(3), gamma(1), delta(1), epsilon(1). F(0) has three main subunits: a(1), b(2) and c(10-14). The alpha and beta chains form an alternating ring which encloses part of the gamma chain. F(1) is attached to F(0) by a central stalk formed by the gamma and epsilon chains, while a peripheral stalk is formed by the delta and b chains.

The protein resides in the cell membrane. Its function is as follows. F(1)F(0) ATP synthase produces ATP from ADP in the presence of a proton or sodium gradient. F-type ATPases consist of two structural domains, F(1) containing the extramembraneous catalytic core and F(0) containing the membrane proton channel, linked together by a central stalk and a peripheral stalk. During catalysis, ATP synthesis in the catalytic domain of F(1) is coupled via a rotary mechanism of the central stalk subunits to proton translocation. This protein is part of the stalk that links CF(0) to CF(1). It either transmits conformational changes from CF(0) to CF(1) or is implicated in proton conduction. The protein is ATP synthase subunit delta of Roseiflexus castenholzii (strain DSM 13941 / HLO8).